The sequence spans 460 residues: Glucan endo-1,3-beta-D-glucosidase (460 aa).

A signal peptide spans 1-26; that stretch reads MAANVQTSSLLFLVFLLLQNFYSANS. Glu-123 serves as the catalytic Proton donor. Glu-268 (nucleophile) is an active-site residue. The interval 352–371 is disordered; the sequence is NTQNPTTPATPTPTPKAAGS. N-linked (GlcNAc...) asparagine glycosylation is present at Asn-355. A disulfide bridge connects residues Cys-373 and Cys-435. The N-linked (GlcNAc...) asparagine glycan is linked to Asn-447.

Belongs to the glycosyl hydrolase 17 family. As to quaternary structure, homodimer. Post-translationally, glycosylated. In terms of processing, contains two additional disulfide bonds, but it is unclear if they are between the pairs Cys-392-Cys-398 and Cys-407-Cys-453 (PudMed:18096638) or between the pairs Cys-392-Cys-453 and Cys-398-Cys-407 (PudMed:12392450). Expressed only in pollen.

The protein resides in the secreted. It carries out the reaction Hydrolysis of (1-&gt;3)-beta-D-glucosidic linkages in (1-&gt;3)-beta-D-glucans.. This Olea europaea (Common olive) protein is Glucan endo-1,3-beta-D-glucosidase (OLE9).